The primary structure comprises 377 residues: NADH dehydrogenase [ubiquinone] 1 alpha subcomplex subunit 9, mitochondrial (377 aa).

The N-terminal 35 residues, methionine 1 to glutamine 35, are a transit peptide targeting the mitochondrion. At lysine 175 the chain carries N6-succinyllysine. 2 positions are modified to N6-acetyllysine: lysine 189 and lysine 370.

Belongs to the complex I NDUFA9 subunit family. As to quaternary structure, complex I is composed of 45 different subunits. This a component of the hydrophobic protein fraction. Interacts with BLOC1S1. Interacts with SLC2A4. Interacts with CLOCK. Interacts with RAB5IF. It depends on FAD as a cofactor. Acetylated on lysine residues. BLOC1S1 is required for acetylation.

It localises to the mitochondrion matrix. Functionally, accessory subunit of the mitochondrial membrane respiratory chain NADH dehydrogenase (Complex I), that is believed not to be involved in catalysis. Complex I functions in the transfer of electrons from NADH to the respiratory chain. The immediate electron acceptor for the enzyme is believed to be ubiquinone. The protein is NADH dehydrogenase [ubiquinone] 1 alpha subcomplex subunit 9, mitochondrial (NDUFA9) of Gorilla gorilla gorilla (Western lowland gorilla).